A 177-amino-acid chain; its full sequence is Nucleoside triphosphate/diphosphate phosphatase (177 aa).

Arginine 23 (proton donor) is an active-site residue. Asparagine 87, aspartate 103, aspartate 105, aspartate 107, aspartate 120, and glutamate 123 together coordinate Mg(2+).

Belongs to the Ntdp family. Mg(2+) is required as a cofactor.

The catalysed reaction is a ribonucleoside 5'-triphosphate + H2O = a ribonucleoside 5'-diphosphate + phosphate + H(+). The enzyme catalyses a ribonucleoside 5'-diphosphate + H2O = a ribonucleoside 5'-phosphate + phosphate + H(+). Has nucleoside phosphatase activity towards nucleoside triphosphates and nucleoside diphosphates. The protein is Nucleoside triphosphate/diphosphate phosphatase of Streptococcus thermophilus (strain CNRZ 1066).